Here is a 76-residue protein sequence, read N- to C-terminus: Kappa-actitoxin-Avd4e (76 aa).

An N-terminal signal peptide occupies residues 1–19 (MNKALFLCLVVLCAAVVFA). A propeptide spanning residues 20–31 (AEDLQKAKHAPF) is cleaved from the precursor. 3 disulfide bridges follow: Cys-37-Cys-72, Cys-39-Cys-65, and Cys-55-Cys-73. The short motif at 45–47 (RGD) is the Cell attachment site element.

Belongs to the sea anemone type 3 (BDS) potassium channel toxin family. Moderately expressed in the ectodermal tissue from the distal and proximal tentacles, body wall, and oral disk.

It localises to the secreted. The protein resides in the nematocyst. In terms of biological role, is member of a fraction that shows antiangiogenic activity, since it inhibits human microvascular endothelial cells (HMEC) tubulogenesis. This protein could be a kunitz-type inhibitor with a RGD motif that could block angiogenesis in binding on integrins. Blocks Kv3 voltage-gated potassium channels. Reduces blood pressure. In Anemonia viridis (Snakelocks anemone), this protein is Kappa-actitoxin-Avd4e.